A 456-amino-acid chain; its full sequence is Protein odr-4 homolog (456 aa).

Positions 374-401 are enriched in low complexity; the sequence is IESSKNNNNNNNNNNNNNNNNNNNNSKL. Positions 374–403 are disordered; it reads IESSKNNNNNNNNNNNNNNNNNNNNSKLSN. Residues 436–456 traverse the membrane as a helical segment; sequence YLIIIISVLVLMVAFYFKFFV.

The protein belongs to the ODR-4 family.

It localises to the membrane. In terms of biological role, may play a role in the trafficking of a subset of G-protein coupled receptors. In Dictyostelium discoideum (Social amoeba), this protein is Protein odr-4 homolog.